The primary structure comprises 711 residues: Ribosomal RNA large subunit methyltransferase K/L (711 aa).

Residues 43-154 (LGYRITLWSR…RGQITIGLNF (112 aa)) form the THUMP domain.

The protein belongs to the methyltransferase superfamily. RlmKL family.

It localises to the cytoplasm. The enzyme catalyses guanosine(2445) in 23S rRNA + S-adenosyl-L-methionine = N(2)-methylguanosine(2445) in 23S rRNA + S-adenosyl-L-homocysteine + H(+). The catalysed reaction is guanosine(2069) in 23S rRNA + S-adenosyl-L-methionine = N(2)-methylguanosine(2069) in 23S rRNA + S-adenosyl-L-homocysteine + H(+). In terms of biological role, specifically methylates the guanine in position 2445 (m2G2445) and the guanine in position 2069 (m7G2069) of 23S rRNA. The chain is Ribosomal RNA large subunit methyltransferase K/L from Shewanella woodyi (strain ATCC 51908 / MS32).